The chain runs to 330 residues: Adenylate isopentenyltransferase 8, chloroplastic (330 aa).

A chloroplast-targeting transit peptide spans 1–35 (MQNLTSTFVSPSMIPITSPRLRLPPPRSVVPMTTV). Position 50-57 (50-57 (GATGSGKS)) interacts with ATP.

The protein belongs to the IPP transferase family. As to expression, expressed in roots and in immature seeds with highest expression in the chalazal endosperm.

The protein localises to the plastid. The protein resides in the chloroplast. The catalysed reaction is dimethylallyl diphosphate + ADP = N(6)-(dimethylallyl)adenosine 5'-diphosphate + diphosphate. It carries out the reaction dimethylallyl diphosphate + ATP = N(6)-(dimethylallyl)adenosine 5'-triphosphate + diphosphate. Functionally, involved in cytokinin biosynthesis. Catalyzes the transfer of an isopentenyl group from dimethylallyl diphosphate (DMAPP) to ATP and ADP. The chain is Adenylate isopentenyltransferase 8, chloroplastic (IPT8) from Arabidopsis thaliana (Mouse-ear cress).